The chain runs to 385 residues: 1-deoxy-D-xylulose 5-phosphate reductoisomerase (385 aa).

NADPH contacts are provided by Thr-10, Gly-11, Ser-12, Ile-13, and Asn-124. Lys-125 provides a ligand contact to 1-deoxy-D-xylulose 5-phosphate. Position 126 (Glu-126) interacts with NADPH. Residue Asp-150 coordinates Mn(2+). 4 residues coordinate 1-deoxy-D-xylulose 5-phosphate: Ser-151, Glu-152, Ser-176, and His-199. A Mn(2+)-binding site is contributed by Glu-152. Residue Gly-205 coordinates NADPH. 1-deoxy-D-xylulose 5-phosphate contacts are provided by Ser-212, Asn-217, Lys-218, and Glu-221. Mn(2+) is bound at residue Glu-221.

The protein belongs to the DXR family. Requires Mg(2+) as cofactor. Mn(2+) is required as a cofactor.

The catalysed reaction is 2-C-methyl-D-erythritol 4-phosphate + NADP(+) = 1-deoxy-D-xylulose 5-phosphate + NADPH + H(+). The protein operates within isoprenoid biosynthesis; isopentenyl diphosphate biosynthesis via DXP pathway; isopentenyl diphosphate from 1-deoxy-D-xylulose 5-phosphate: step 1/6. Functionally, catalyzes the NADPH-dependent rearrangement and reduction of 1-deoxy-D-xylulose-5-phosphate (DXP) to 2-C-methyl-D-erythritol 4-phosphate (MEP). The protein is 1-deoxy-D-xylulose 5-phosphate reductoisomerase of Clostridium botulinum (strain Eklund 17B / Type B).